The primary structure comprises 297 residues: uncharacterized protein (297 aa).

The HTH araC/xylS-type domain occupies 187 to 285 (EKLIATLHAS…GYAPSAVLKN (99 aa)). 2 consecutive DNA-binding regions (H-T-H motif) follow at residues 204–225 (ADMA…LRYT) and 252–275 (VGEV…KHKF).

This is an uncharacterized protein from Escherichia coli (strain K12).